A 97-amino-acid chain; its full sequence is Co-chaperonin GroES (97 aa).

Belongs to the GroES chaperonin family. Heptamer of 7 subunits arranged in a ring. Interacts with the chaperonin GroEL.

It is found in the cytoplasm. In terms of biological role, together with the chaperonin GroEL, plays an essential role in assisting protein folding. The GroEL-GroES system forms a nano-cage that allows encapsulation of the non-native substrate proteins and provides a physical environment optimized to promote and accelerate protein folding. GroES binds to the apical surface of the GroEL ring, thereby capping the opening of the GroEL channel. The sequence is that of Co-chaperonin GroES from Enterobacter sp. (strain 638).